The chain runs to 1182 residues: CRISPR-associated endoribonuclease Cas13a (1182 aa).

The stretch at phenylalanine 132–glutamine 279 forms a coiled coil. Residues tyrosine 366 to isoleucine 508 form an HEPN-like fold 1 region. The stretch at lysine 896–glutamate 955 forms a coiled coil. The segment at leucine 965–threonine 1120 is HEPN-like fold 2.

This sequence belongs to the CRISPR-associated endoribonuclease Cas13a family. Requires a divalent metal cation as cofactor.

Its activity is regulated as follows. Target RNA acts as an activator for non-specific ssRNA degradation. Functionally, CRISPR (clustered regularly interspaced short palindromic repeat), is an adaptive immune system that provides protection against mobile genetic elements (viruses, transposable elements and conjugative plasmids). CRISPR clusters contain sequences complementary to antecedent mobile elements and target invading nucleic acids. Unlike many single-component effectors, this CRISPR-Cas system targets RNA. CRISPR clusters are transcribed from pre-CRISPR RNA (crRNA) and processed into crRNA by this protein. Cleaves linear target ssRNA in a pre-crRNA-dependent fashion, preferentially before U residues. Binding a viable target RNA target activates this protein for non-specific RNA degradation in vitro (called collateral RNA degradation), which is fairly sensitive as it requires picomolar levels of viable target RNA. The sequence is that of CRISPR-associated endoribonuclease Cas13a from Leptotrichia wadei (strain F0279).